The chain runs to 1048 residues: Putative helicase/primase complex protein (1048 aa).

A disordered region spans residues 1025 to 1048 (STKEESSPTREETSSIKEKTFTET).

This sequence belongs to the asfivirus F1055L family.

Functionally, may be involved in DNA replication. This is Putative helicase/primase complex protein from African swine fever virus (isolate Pig/Kenya/KEN-50/1950) (ASFV).